We begin with the raw amino-acid sequence, 284 residues long: L-ribulose-5-phosphate 3-epimerase UlaE (284 aa).

Belongs to the L-ribulose-5-phosphate 3-epimerase family.

The catalysed reaction is L-ribulose 5-phosphate = L-xylulose 5-phosphate. Its pathway is cofactor degradation; L-ascorbate degradation; D-xylulose 5-phosphate from L-ascorbate: step 3/4. Its function is as follows. Catalyzes the isomerization of L-xylulose-5-phosphate to L-ribulose-5-phosphate. Is involved in the anaerobic L-ascorbate utilization. This chain is L-ribulose-5-phosphate 3-epimerase UlaE, found in Shigella flexneri.